The primary structure comprises 295 residues: Transcription factor MYB34 (295 aa).

HTH myb-type domains are found at residues 9 to 61 (EEGI…ANYL) and 62 to 116 (RPDI…KKRL). 2 consecutive DNA-binding regions (H-T-H motif) follow at residues 37 to 61 (WRTLPEKAGLKRCGKSCRLRWANYL) and 89 to 112 (WAAIATSLAGRTDNEIKNYWNTNL).

Can form complexes with MYC2, MYC3 or MYC4. In terms of tissue distribution, expressed in trichomes.

Its subcellular location is the nucleus. Its function is as follows. Transcription factor involved in tryptophan gene activation and in indole-3-acetic acid (IAA) and indolic glucosinolates (IG) biosynthesis. Acts as a direct transcriptional activator of both Trp synthesis genes and Trp secondary metabolism genes. In Arabidopsis thaliana (Mouse-ear cress), this protein is Transcription factor MYB34 (MYB34).